The sequence spans 374 residues: Alcohol dehydrogenase class-3 (374 aa).

The residue at position 2 (Ala-2) is an N-acetylalanine. The Zn(2+) site is built by Cys-45, His-67, Cys-97, Cys-100, Cys-103, Cys-111, and Cys-174. An N6-succinyllysine modification is found at Lys-233. At Ser-247 the chain carries Phosphoserine. Residue Lys-315 is modified to N6-succinyllysine. Phosphoserine is present on residues Ser-324 and Ser-351.

It belongs to the zinc-containing alcohol dehydrogenase family. Class-III subfamily. As to quaternary structure, homodimer. Zn(2+) serves as cofactor. As to expression, ubiquitous.

Its subcellular location is the cytoplasm. It catalyses the reaction a primary alcohol + NAD(+) = an aldehyde + NADH + H(+). The catalysed reaction is a secondary alcohol + NAD(+) = a ketone + NADH + H(+). It carries out the reaction S-(hydroxymethyl)glutathione + NADP(+) = S-formylglutathione + NADPH + H(+). The enzyme catalyses S-(hydroxymethyl)glutathione + NAD(+) = S-formylglutathione + NADH + H(+). It catalyses the reaction 20-oxo-(5Z,8Z,11Z,14Z)-eicosatetraenoate + NAD(+) + H2O = (5Z,8Z,11Z,14Z)-eicosatetraenedioate + NADH + 2 H(+). The catalysed reaction is 20-hydroxy-(5Z,8Z,11Z,14Z)-eicosatetraenoate + NAD(+) = 20-oxo-(5Z,8Z,11Z,14Z)-eicosatetraenoate + NADH + H(+). It carries out the reaction S-nitrosoglutathione + NADH + H(+) = S-(hydroxysulfenamide)glutathione + NAD(+). Its function is as follows. Catalyzes the oxidation of long-chain primary alcohols and the oxidation of S-(hydroxymethyl) glutathione. Also oxidizes long chain omega-hydroxy fatty acids, such as 20-HETE, producing both the intermediate aldehyde, 20-oxoarachidonate and the end product, a dicarboxylic acid, (5Z,8Z,11Z,14Z)-eicosatetraenedioate. Class-III ADH is remarkably ineffective in oxidizing ethanol. Required for clearance of cellular formaldehyde, a cytotoxic and carcinogenic metabolite that induces DNA damage. Also acts as a S-nitroso-glutathione reductase by catalyzing the NADH-dependent reduction of S-nitrosoglutathione, thereby regulating protein S-nitrosylation. The chain is Alcohol dehydrogenase class-3 from Mus musculus (Mouse).